The primary structure comprises 452 residues: MKRILVSLYEKEKYLDILRELHEKGWEIWASSGTAKFLKSNGIEANDVSTITGFENLLGGLVKTLHPEIFAGILGPEPRWDVVFVDLYPPPDIDIGGVALLRAAAKNWKKVKPAFDMETLKLAIEIDDEETRKYLAGMTFAFTSVYDSIRANQFVEGISLAFKREDLQLRYGENPHEKAFVYGKPAFEILHEGKTISFNNILDAENAWFMAKNLPRMGAVVVKHQSPCGAAIGEDKVEIVKKAIEADDESSFGGILAVNFEMDEEVAKSLKKYLEVIVAPSFTQEAIEVLSKKKVRLLKPGDYASWAGKMAFGSLVLSERKYPEGNFELVVGEPLSEKELEDLEFAYRVVEGAKSNAVLIAKDGVTVGIGSGQPSRKRAAWIATVMAGEKAKGAVAASDAFFPFPDSLEILAQAGVKAVVAPLGSIRDEEVIEKARELGITFYKAPSRVFRH.

The MGS-like domain maps to Met-1 to Phe-115.

This sequence belongs to the PurH family.

The enzyme catalyses (6R)-10-formyltetrahydrofolate + 5-amino-1-(5-phospho-beta-D-ribosyl)imidazole-4-carboxamide = 5-formamido-1-(5-phospho-D-ribosyl)imidazole-4-carboxamide + (6S)-5,6,7,8-tetrahydrofolate. The catalysed reaction is IMP + H2O = 5-formamido-1-(5-phospho-D-ribosyl)imidazole-4-carboxamide. The protein operates within purine metabolism; IMP biosynthesis via de novo pathway; 5-formamido-1-(5-phospho-D-ribosyl)imidazole-4-carboxamide from 5-amino-1-(5-phospho-D-ribosyl)imidazole-4-carboxamide (10-formyl THF route): step 1/1. Its pathway is purine metabolism; IMP biosynthesis via de novo pathway; IMP from 5-formamido-1-(5-phospho-D-ribosyl)imidazole-4-carboxamide: step 1/1. In Thermotoga maritima (strain ATCC 43589 / DSM 3109 / JCM 10099 / NBRC 100826 / MSB8), this protein is Bifunctional purine biosynthesis protein PurH.